A 62-amino-acid polypeptide reads, in one-letter code: Sperm histone (62 aa).

Residues 1 to 62 (MARYRRSRTR…GSRRRRRRRY (62 aa)) form a disordered region. Thr-9 is modified (phosphothreonine).

It belongs to the protamine P1 family. Testis.

It localises to the nucleus. It is found in the chromosome. Its function is as follows. Protamines substitute for histones in the chromatin of sperm during the haploid phase of spermatogenesis. They compact sperm DNA into a highly condensed, stable and inactive complex. This is Sperm histone from Gallus gallus (Chicken).